A 218-amino-acid chain; its full sequence is LOB domain-containing protein 29 (218 aa).

One can recognise an LOB domain in the interval 10–112 (SPCGACKFLR…AELEILKQQA (103 aa)).

Belongs to the LOB domain-containing protein family. Expressed in roots.

In terms of biological role, involved in lateral root formation. Regulated by the transcriptional activators ARF7 and ARF19. The protein is LOB domain-containing protein 29 (LBD29) of Arabidopsis thaliana (Mouse-ear cress).